The primary structure comprises 342 residues: GTPase Obg (342 aa).

In terms of domain architecture, Obg spans 1–159 (MKFLDLCKVY…RTIWLRLKLI (159 aa)). The OBG-type G domain maps to 160–327 (ADAGLLGLPN…VLRALWAEID (168 aa)). GTP is bound by residues 166–173 (GLPNAGKS), 191–195 (FTTLV), 212–215 (DIPG), 279–282 (NKID), and 308–310 (SGV). The Mg(2+) site is built by serine 173 and threonine 193.

Belongs to the TRAFAC class OBG-HflX-like GTPase superfamily. OBG GTPase family. In terms of assembly, monomer. The cofactor is Mg(2+).

It localises to the cytoplasm. An essential GTPase which binds GTP, GDP and possibly (p)ppGpp with moderate affinity, with high nucleotide exchange rates and a fairly low GTP hydrolysis rate. Plays a role in control of the cell cycle, stress response, ribosome biogenesis and in those bacteria that undergo differentiation, in morphogenesis control. In Cereibacter sphaeroides (strain KD131 / KCTC 12085) (Rhodobacter sphaeroides), this protein is GTPase Obg.